The sequence spans 653 residues: MAPSIRKAIGAVKDQTSIGIAKVASNMAPDLEVAIVKATSHDDDPASEKYIREILNLTSLSRGYILACVTSVSRRLSKTRDWVVALKALMLVHRLLNEGDPIFQEEILYSTRRGTRMLNMSDFRDEAHSSSWDHSAFVRTYAGYLDQRLELALFERKSGVSVNSGGNSSHHSNNDDRYGRGRDDFRSPPPRSYDYENGGGGGSDFRGDNNGYGGVPKRSRSYGDMTEMGGGGGGGGRDEKKVVTPLREMTPERIFGKMGHLQRLLDRFLSLRPTGLAKNSRMILIALYPVVRESFKLYADICEVLAVLLDKFFDMEYSDCVKAFDAYASAAKQIDELIAFYNWCKETGVARSSEYPEVQRITSKLLETLEEFVRDRAKRGKSPERKEIEAPPPVVEEEEPEPDMNEIKALPPPENYTPPPPPEPEPQPEKPQFTEDLVNLREDEVTADDQGNKFALALFAGPPGNNGKWEAFSSNGVTSAWQNPAAEPGKADWELALVETTSNLEKQTAALGGGFDNLLLNGMYDQGMVRQHVSTSQLTGGSASSVALPLPGKTNNQVLALPAPDGTVEKVNQDPFAASLTIPPPSYVQMAEMEKKQYLLSQEQQLWQQYQRDGMRGQASLAKMNTGPVPAYGMPPVNGMGPPPTGYYYNNPY.

The 137-residue stretch at 23–159 folds into the ENTH domain; that stretch reads VASNMAPDLE…ELALFERKSG (137 aa). Residues 160-171 show a composition bias toward low complexity; that stretch reads VSVNSGGNSSHH. The interval 160-240 is disordered; it reads VSVNSGGNSS…GGGGGGRDEK (81 aa). A compositionally biased stretch (basic and acidic residues) spans 172 to 186; it reads SNNDDRYGRGRDDFR. Residues 197 to 214 are compositionally biased toward gly residues; that stretch reads NGGGGGSDFRGDNNGYGG. A Phosphoserine modification is found at Ser-221. Thr-244 carries the post-translational modification Phosphothreonine. The segment covering 376–389 has biased composition (basic and acidic residues); it reads RAKRGKSPERKEIE. The disordered stretch occupies residues 376–431; sequence RAKRGKSPERKEIEAPPPVVEEEEPEPDMNEIKALPPPENYTPPPPPEPEPQPEKP. Positions 395–404 are enriched in acidic residues; sequence VEEEEPEPDM. The segment covering 410 to 425 has biased composition (pro residues); that stretch reads LPPPENYTPPPPPEPE.

The protein resides in the membrane. It localises to the clathrin-coated pit. Its subcellular location is the golgi apparatus. It is found in the cytoplasmic vesicle. The protein localises to the clathrin-coated vesicle. This is Putative clathrin assembly protein At2g25430 from Arabidopsis thaliana (Mouse-ear cress).